Consider the following 148-residue polypeptide: Deoxyuridine 5'-triphosphate nucleotidohydrolase (148 aa).

Substrate is bound by residues 67 to 69, Asn-80, 84 to 86, and Met-94; these read RSG and LID.

Belongs to the dUTPase family. Mg(2+) is required as a cofactor.

It catalyses the reaction dUTP + H2O = dUMP + diphosphate + H(+). It functions in the pathway pyrimidine metabolism; dUMP biosynthesis; dUMP from dCTP (dUTP route): step 2/2. This enzyme is involved in nucleotide metabolism: it produces dUMP, the immediate precursor of thymidine nucleotides and it decreases the intracellular concentration of dUTP so that uracil cannot be incorporated into DNA. The polypeptide is Deoxyuridine 5'-triphosphate nucleotidohydrolase (Ralstonia nicotianae (strain ATCC BAA-1114 / GMI1000) (Ralstonia solanacearum)).